A 310-amino-acid polypeptide reads, in one-letter code: Tagatose-6-phosphate kinase (310 aa).

It belongs to the carbohydrate kinase PfkB family. LacC subfamily.

The catalysed reaction is D-tagatofuranose 6-phosphate + ATP = D-tagatofuranose 1,6-bisphosphate + ADP + H(+). It functions in the pathway carbohydrate metabolism; D-tagatose 6-phosphate degradation; D-glyceraldehyde 3-phosphate and glycerone phosphate from D-tagatose 6-phosphate: step 1/2. The sequence is that of Tagatose-6-phosphate kinase from Lactococcus lactis subsp. lactis (Streptococcus lactis).